The following is a 1634-amino-acid chain: Phosphatidylinositol 4-phosphate 3-kinase C2 domain-containing subunit beta (1634 aa).

Residues 2-298 are interaction with GRB2; the sequence is SSTQGNGEHW…YASRYGNRKN (297 aa). 2 disordered regions span residues 45–188 and 259–315; these read EENR…QPSD and GRGP…VGSR. A compositionally biased stretch (polar residues) spans 87-112; sequence SDPTLNYNSLSPQEGPPNHSTSQGPQ. A compositionally biased stretch (low complexity) spans 176-187; it reads GSPSSSKISQPS. Over residues 259 to 270 the composition is skewed to basic and acidic residues; that stretch reads GRGPLDFSKDTS. In terms of domain architecture, PI3K-RBD spans 375–463; it reads EVNLKVTVLC…DIDIRLQLME (89 aa). In terms of domain architecture, C2 PI3K-type spans 635–786; that stretch reads VYATHRIPII…DSVILQIDFP (152 aa). The region spanning 805 to 981 is the PIK helical domain; the sequence is RYEFGSLREE…QYLLAALLCC (177 aa). The PI3K/PI4K catalytic domain maps to 1050-1328; that stretch reads VPRDCSYFNS…LIESSLGSVA (279 aa). Positions 1056–1062 are G-loop; it reads YFNSNAV. Positions 1192–1200 are catalytic loop; the sequence is GICDRHNDN. An activation loop region spans residues 1211 to 1237; that stretch reads HIDFGRFLGHAQMFGNIKRDRAPFVFT. The PX domain maps to 1365–1481; that stretch reads GRISDVFLCR…TFFHPLPRDE (117 aa). Residues 1504–1624 form the C2 domain; that stretch reads VGGEVKLSIS…DLAQEKTGWF (121 aa).

This sequence belongs to the PI3/PI4-kinase family. In terms of assembly, part of a complex with ERBB2 and EGFR. Part of a complex with phosphorylated EGFR and GRB2. Interacts with phosphorylated EGFR and PDGFR, maybe indirectly. Interacts with GRB2. It depends on Ca(2+) as a cofactor. Requires Mg(2+) as cofactor. The cofactor is Mn(2+). Expressed in columnar and transitional epithelia, mononuclear cells, and ganglion cells (at protein level). Widely expressed, with highest levels in thymus and placenta and lowest in peripheral blood, skeletal muscle and kidney.

Its subcellular location is the microsome. The protein resides in the cell membrane. It localises to the cytoplasm. It is found in the cytosol. The protein localises to the nucleus. Its subcellular location is the endoplasmic reticulum. It carries out the reaction a 1,2-diacyl-sn-glycero-3-phospho-(1D-myo-inositol 4-phosphate) + ATP = a 1,2-diacyl-sn-glycero-3-phospho-(1D-myo-inositol-3,4-bisphosphate) + ADP + H(+). The catalysed reaction is a 1,2-diacyl-sn-glycero-3-phospho-(1D-myo-inositol) + ATP = a 1,2-diacyl-sn-glycero-3-phospho-(1D-myo-inositol-3-phosphate) + ADP + H(+). With respect to regulation, activated by GRB2. Its function is as follows. Phosphorylates PtdIns and PtdIns4P with a preference for PtdIns. Does not phosphorylate PtdIns(4,5)P2. May be involved in EGF and PDGF signaling cascades. The chain is Phosphatidylinositol 4-phosphate 3-kinase C2 domain-containing subunit beta (PIK3C2B) from Homo sapiens (Human).